A 279-amino-acid polypeptide reads, in one-letter code: Pantothenate synthetase (279 aa).

M27–H34 contacts ATP. The active-site Proton donor is the H34. Q58 contacts (R)-pantoate. Q58 contributes to the beta-alanine binding site. ATP is bound at residue G144–D147. Q150 is a (R)-pantoate binding site. Residues V173 and M181–R184 contribute to the ATP site.

It belongs to the pantothenate synthetase family. In terms of assembly, homodimer.

Its subcellular location is the cytoplasm. The catalysed reaction is (R)-pantoate + beta-alanine + ATP = (R)-pantothenate + AMP + diphosphate + H(+). It functions in the pathway cofactor biosynthesis; (R)-pantothenate biosynthesis; (R)-pantothenate from (R)-pantoate and beta-alanine: step 1/1. Catalyzes the condensation of pantoate with beta-alanine in an ATP-dependent reaction via a pantoyl-adenylate intermediate. The sequence is that of Pantothenate synthetase from Geobacter sp. (strain M21).